Consider the following 234-residue polypeptide: Adenosine 5'-phosphosulfate reductase (234 aa).

4 residues coordinate [4Fe-4S] cluster: Cys-120, Cys-121, Cys-203, and Cys-206. Cys-229 serves as the catalytic Nucleophile; cysteine thiosulfonate intermediate.

It belongs to the PAPS reductase family. CysH subfamily. It depends on [4Fe-4S] cluster as a cofactor.

The protein resides in the cytoplasm. It catalyses the reaction [thioredoxin]-disulfide + sulfite + AMP + 2 H(+) = adenosine 5'-phosphosulfate + [thioredoxin]-dithiol. It functions in the pathway sulfur metabolism; hydrogen sulfide biosynthesis; sulfite from sulfate. Functionally, catalyzes the formation of sulfite from adenosine 5'-phosphosulfate (APS) using thioredoxin as an electron donor. The sequence is that of Adenosine 5'-phosphosulfate reductase from Bacillus thuringiensis subsp. konkukian (strain 97-27).